The following is a 302-amino-acid chain: MSSALYESSITSLPLLGRGKVRENYAVGDDKLLMVTTDRLSAFDVILGQPIPDKGRVLAQMSDFWFRKLRHIVPTHETGIAPEAVVQPGEADQVRGRAIVVKRLKPILVEAVVRGYLAGSGWKDYQATGKVCGVQLAPGLRNAEKLPEPIFTPAAKADVGEHDENISFDEVERRIGPELAAQIRDVSIRLYKEASDFAATRGIIIADTKFEFGLDENGTLTLMDEALTADSSRFWPADSYQVGTNPPSFDKQFVRDWLEAVRIDGQPWPKTAPAPQLPADIIEKTADKYREALTRLTGETLR.

The protein belongs to the SAICAR synthetase family.

It carries out the reaction 5-amino-1-(5-phospho-D-ribosyl)imidazole-4-carboxylate + L-aspartate + ATP = (2S)-2-[5-amino-1-(5-phospho-beta-D-ribosyl)imidazole-4-carboxamido]succinate + ADP + phosphate + 2 H(+). Its pathway is purine metabolism; IMP biosynthesis via de novo pathway; 5-amino-1-(5-phospho-D-ribosyl)imidazole-4-carboxamide from 5-amino-1-(5-phospho-D-ribosyl)imidazole-4-carboxylate: step 1/2. The protein is Phosphoribosylaminoimidazole-succinocarboxamide synthase of Ralstonia nicotianae (strain ATCC BAA-1114 / GMI1000) (Ralstonia solanacearum).